A 321-amino-acid chain; its full sequence is Beta-ketoacyl-[acyl-carrier-protein] synthase III (321 aa).

Residues C115 and H248 contribute to the active site. Residues 249 to 253 form an ACP-binding region; that stretch reads QANIR. N278 is a catalytic residue.

Belongs to the thiolase-like superfamily. FabH family. In terms of assembly, homodimer.

Its subcellular location is the cytoplasm. It carries out the reaction malonyl-[ACP] + acetyl-CoA + H(+) = 3-oxobutanoyl-[ACP] + CO2 + CoA. Its pathway is lipid metabolism; fatty acid biosynthesis. Catalyzes the condensation reaction of fatty acid synthesis by the addition to an acyl acceptor of two carbons from malonyl-ACP. Catalyzes the first condensation reaction which initiates fatty acid synthesis and may therefore play a role in governing the total rate of fatty acid production. Possesses both acetoacetyl-ACP synthase and acetyl transacylase activities. Its substrate specificity determines the biosynthesis of branched-chain and/or straight-chain of fatty acids. In Azoarcus sp. (strain BH72), this protein is Beta-ketoacyl-[acyl-carrier-protein] synthase III.